The primary structure comprises 1464 residues: DNA-directed RNA polymerase subunit beta' (1464 aa).

Aspartate 541, aspartate 543, and aspartate 545 together coordinate Mg(2+). Residues cysteine 1022, cysteine 1098, cysteine 1105, and cysteine 1108 each contribute to the Zn(2+) site. The segment at leucine 1435–aspartate 1464 is disordered.

Belongs to the RNA polymerase beta' chain family. As to quaternary structure, the RNAP catalytic core consists of 2 alpha, 1 beta, 1 beta' and 1 omega subunit. When a sigma factor is associated with the core the holoenzyme is formed, which can initiate transcription. Requires Mg(2+) as cofactor. Zn(2+) serves as cofactor.

It catalyses the reaction RNA(n) + a ribonucleoside 5'-triphosphate = RNA(n+1) + diphosphate. Its function is as follows. DNA-dependent RNA polymerase catalyzes the transcription of DNA into RNA using the four ribonucleoside triphosphates as substrates. In Metamycoplasma arthritidis (strain 158L3-1) (Mycoplasma arthritidis), this protein is DNA-directed RNA polymerase subunit beta'.